Here is a 430-residue protein sequence, read N- to C-terminus: MSQLQSLRGMVDLLPETLQCWQAVEAVAREHFRRSGFGEIRTPLLETTDLFCRGIGEGTDVVGKEMYSFTDRGERACTLRPEGTASVVRAALQHGLLSQGAQKLWYAGPMFRYERPQAGRQRQFHQIGVEWLGAESARSDVEVIALAWDLLAQLGVGGLELEINSLGTPEDRQAYRTALVAWLEQRLDQLDDDSRARLSTNPLRILDSKNKDTQALLEQAPTLADALSSESRQRFDAVQQGLTALGIPFRLNPRLVRGLDYYGHTAFEITSDQLGAQATVCGGGRYNGLIAQLGGAPTPAIGWALGMERLLLVLEAAATADPDGAAARLVATSAPDAYVINRGDQAETMALTLTRGLRAAGLAVELDGSGSAFGKQFKRADRCGARWALVLGDDEAARAEVRLKPLQHEGEDRSWAVADIAAIVETLRTP.

It belongs to the class-II aminoacyl-tRNA synthetase family. Homodimer.

It is found in the cytoplasm. It catalyses the reaction tRNA(His) + L-histidine + ATP = L-histidyl-tRNA(His) + AMP + diphosphate + H(+). This Parasynechococcus marenigrum (strain WH8102) protein is Histidine--tRNA ligase.